Reading from the N-terminus, the 331-residue chain is Phosphate acyltransferase (331 aa).

Belongs to the PlsX family. In terms of assembly, homodimer. Probably interacts with PlsY.

The protein resides in the cytoplasm. The enzyme catalyses a fatty acyl-[ACP] + phosphate = an acyl phosphate + holo-[ACP]. It participates in lipid metabolism; phospholipid metabolism. In terms of biological role, catalyzes the reversible formation of acyl-phosphate (acyl-PO(4)) from acyl-[acyl-carrier-protein] (acyl-ACP). This enzyme utilizes acyl-ACP as fatty acyl donor, but not acyl-CoA. This is Phosphate acyltransferase from Lactococcus lactis subsp. lactis (strain IL1403) (Streptococcus lactis).